A 141-amino-acid polypeptide reads, in one-letter code: Large ribosomal subunit protein uL11 (141 aa).

It belongs to the universal ribosomal protein uL11 family. As to quaternary structure, part of the ribosomal stalk of the 50S ribosomal subunit. Interacts with L10 and the large rRNA to form the base of the stalk. L10 forms an elongated spine to which L12 dimers bind in a sequential fashion forming a multimeric L10(L12)X complex. In terms of processing, one or more lysine residues are methylated.

Functionally, forms part of the ribosomal stalk which helps the ribosome interact with GTP-bound translation factors. The chain is Large ribosomal subunit protein uL11 from Synechococcus elongatus (strain ATCC 33912 / PCC 7942 / FACHB-805) (Anacystis nidulans R2).